A 290-amino-acid chain; its full sequence is Putative beta-lactamase HcpC (290 aa).

Positions Met1–Ala25 are cleaved as a signal peptide. TPR repeat units follow at residues Pro29–Ser62, Cys64–Asn98, Cys100–Ala133, Glu134–Asp170, Cys172–Ser205, Pro206–Gly242, and Cys244–Gly278. Disulfide bonds link Cys56–Cys64, Cys92–Cys100, Cys128–Cys136, Cys164–Cys172, Cys200–Cys208, Cys236–Cys244, and Cys272–Cys280.

This sequence belongs to the hcp beta-lactamase family.

It localises to the secreted. The catalysed reaction is a beta-lactam + H2O = a substituted beta-amino acid. Functionally, may hydrolyze 6-aminopenicillinic acid and 7-aminocephalosporanic acid (ACA) derivatives. The protein is Putative beta-lactamase HcpC (hcpC) of Helicobacter pylori (strain ATCC 700392 / 26695) (Campylobacter pylori).